The following is a 138-amino-acid chain: Putative pre-16S rRNA nuclease (138 aa).

The protein belongs to the YqgF nuclease family.

It localises to the cytoplasm. In terms of biological role, could be a nuclease involved in processing of the 5'-end of pre-16S rRNA. In Listeria monocytogenes serovar 1/2a (strain ATCC BAA-679 / EGD-e), this protein is Putative pre-16S rRNA nuclease.